The chain runs to 357 residues: Protein RecA (357 aa).

74-81 (GPESSGKT) contacts ATP.

This sequence belongs to the RecA family.

It localises to the cytoplasm. Can catalyze the hydrolysis of ATP in the presence of single-stranded DNA, the ATP-dependent uptake of single-stranded DNA by duplex DNA, and the ATP-dependent hybridization of homologous single-stranded DNAs. It interacts with LexA causing its activation and leading to its autocatalytic cleavage. The sequence is that of Protein RecA from Bordetella petrii (strain ATCC BAA-461 / DSM 12804 / CCUG 43448).